We begin with the raw amino-acid sequence, 48 residues long: uncharacterized protein (48 aa).

This is an uncharacterized protein from Haemophilus influenzae (strain ATCC 51907 / DSM 11121 / KW20 / Rd).